Consider the following 468-residue polypeptide: Siroheme synthase 1 (468 aa).

Residues 1–204 form a precorrin-2 dehydrogenase /sirohydrochlorin ferrochelatase region; it reads MDYLPIFCRL…GDKASANQLA (204 aa). NAD(+) is bound by residues 22-23 and 43-44; these read EV and PA. The residue at position 128 (Ser128) is a Phosphoserine. Residues 216 to 468 are uroporphyrinogen-III C-methyltransferase; the sequence is GEVILVGAGP…NHGVQAAALA (253 aa). Pro225 is a binding site for S-adenosyl-L-methionine. Asp248 functions as the Proton acceptor in the catalytic mechanism. Lys270 acts as the Proton donor in catalysis. S-adenosyl-L-methionine contacts are provided by residues 301 to 303, Ile306, 331 to 332, Met383, and Gly412; these read GGD and TA.

This sequence in the N-terminal section; belongs to the precorrin-2 dehydrogenase / sirohydrochlorin ferrochelatase family. The protein in the C-terminal section; belongs to the precorrin methyltransferase family.

It catalyses the reaction uroporphyrinogen III + 2 S-adenosyl-L-methionine = precorrin-2 + 2 S-adenosyl-L-homocysteine + H(+). The enzyme catalyses precorrin-2 + NAD(+) = sirohydrochlorin + NADH + 2 H(+). The catalysed reaction is siroheme + 2 H(+) = sirohydrochlorin + Fe(2+). It participates in cofactor biosynthesis; adenosylcobalamin biosynthesis; precorrin-2 from uroporphyrinogen III: step 1/1. It functions in the pathway cofactor biosynthesis; adenosylcobalamin biosynthesis; sirohydrochlorin from precorrin-2: step 1/1. The protein operates within porphyrin-containing compound metabolism; siroheme biosynthesis; precorrin-2 from uroporphyrinogen III: step 1/1. Its pathway is porphyrin-containing compound metabolism; siroheme biosynthesis; siroheme from sirohydrochlorin: step 1/1. It participates in porphyrin-containing compound metabolism; siroheme biosynthesis; sirohydrochlorin from precorrin-2: step 1/1. Functionally, multifunctional enzyme that catalyzes the SAM-dependent methylations of uroporphyrinogen III at position C-2 and C-7 to form precorrin-2 via precorrin-1. Then it catalyzes the NAD-dependent ring dehydrogenation of precorrin-2 to yield sirohydrochlorin. Finally, it catalyzes the ferrochelation of sirohydrochlorin to yield siroheme. The polypeptide is Siroheme synthase 1 (Aeromonas salmonicida (strain A449)).